Here is an 824-residue protein sequence, read N- to C-terminus: Vesicle-fusing ATPase (824 aa).

Residues 582-587 (RGMIVW) and 622-629 (AKTGKTSL) each bind ATP. T627 is a Mg(2+) binding site.

The protein belongs to the AAA ATPase family. As to quaternary structure, homohexamer. Mg(2+) serves as cofactor.

It is found in the cytoplasm. The catalysed reaction is ATP + H2O = ADP + phosphate + H(+). In terms of biological role, required for vesicle-mediated transport. Catalyzes the fusion of transport vesicles within the Golgi cisternae. Is also required for transport from the endoplasmic reticulum to the Golgi stack. Seems to function as a fusion protein required for the delivery of cargo proteins to all compartments of the Golgi stack independent of vesicle origin. This chain is Vesicle-fusing ATPase (nsf-1), found in Caenorhabditis elegans.